We begin with the raw amino-acid sequence, 267 residues long: NAD kinase 2 (267 aa).

The active-site Proton acceptor is the Asp50. NAD(+) is bound by residues 50-51 (DG), Lys55, 122-123 (NE), Arg149, Asp151, 162-167 (TAYNKS), and Ala186.

Belongs to the NAD kinase family. A divalent metal cation is required as a cofactor.

The protein localises to the cytoplasm. The catalysed reaction is NAD(+) + ATP = ADP + NADP(+) + H(+). Its function is as follows. Involved in the regulation of the intracellular balance of NAD and NADP, and is a key enzyme in the biosynthesis of NADP. Catalyzes specifically the phosphorylation on 2'-hydroxyl of the adenosine moiety of NAD to yield NADP. The sequence is that of NAD kinase 2 from Listeria monocytogenes serovar 1/2a (strain ATCC BAA-679 / EGD-e).